A 273-amino-acid polypeptide reads, in one-letter code: 3-methyl-2-oxobutanoate hydroxymethyltransferase (273 aa).

Mg(2+) is bound by residues D53 and D92. Residues 53–54 (DS), D92, and K122 each bind 3-methyl-2-oxobutanoate. E124 lines the Mg(2+) pocket. E191 functions as the Proton acceptor in the catalytic mechanism.

The protein belongs to the PanB family. As to quaternary structure, homodecamer; pentamer of dimers. Requires Mg(2+) as cofactor.

The protein localises to the cytoplasm. The enzyme catalyses 3-methyl-2-oxobutanoate + (6R)-5,10-methylene-5,6,7,8-tetrahydrofolate + H2O = 2-dehydropantoate + (6S)-5,6,7,8-tetrahydrofolate. It functions in the pathway cofactor biosynthesis; (R)-pantothenate biosynthesis; (R)-pantoate from 3-methyl-2-oxobutanoate: step 1/2. Functionally, catalyzes the reversible reaction in which hydroxymethyl group from 5,10-methylenetetrahydrofolate is transferred onto alpha-ketoisovalerate to form ketopantoate. The polypeptide is 3-methyl-2-oxobutanoate hydroxymethyltransferase (Parabacteroides distasonis (strain ATCC 8503 / DSM 20701 / CIP 104284 / JCM 5825 / NCTC 11152)).